Here is a 396-residue protein sequence, read N- to C-terminus: Ribosomal RNA large subunit methyltransferase I (396 aa).

The region spanning 2–81 (SVRLVLAKGR…ESIDIAFFTR (80 aa)) is the PUA domain.

The protein belongs to the methyltransferase superfamily. RlmI family.

Its subcellular location is the cytoplasm. It catalyses the reaction cytidine(1962) in 23S rRNA + S-adenosyl-L-methionine = 5-methylcytidine(1962) in 23S rRNA + S-adenosyl-L-homocysteine + H(+). Its function is as follows. Specifically methylates the cytosine at position 1962 (m5C1962) of 23S rRNA. In Escherichia coli O1:K1 / APEC, this protein is Ribosomal RNA large subunit methyltransferase I.